A 56-amino-acid polypeptide reads, in one-letter code: Envelope protein H3 (56 aa).

It belongs to the orthopoxvirus OPG108 family. Post-translationally, does not contain disulfide bonds.

The protein localises to the virion membrane. In terms of biological role, envelope protein that binds to heparan sulfate on the cell surface and might provide virion attachment to target cell. The protein is Envelope protein H3 (OPG108) of Vaccinia virus (strain L-IVP) (VACV).